A 528-amino-acid polypeptide reads, in one-letter code: Folylpolyglutamate synthase (528 aa).

104–107 (GKGG) provides a ligand contact to ATP. Mg(2+)-binding residues include serine 134, glutamate 208, and histidine 236. ATP-binding residues include arginine 351 and aspartate 365.

Belongs to the folylpolyglutamate synthase family. A monovalent cation is required as a cofactor.

It is found in the mitochondrion inner membrane. The protein localises to the mitochondrion matrix. The protein resides in the cytoplasm. The catalysed reaction is (6S)-5,6,7,8-tetrahydrofolyl-(gamma-L-Glu)(n) + L-glutamate + ATP = (6S)-5,6,7,8-tetrahydrofolyl-(gamma-L-Glu)(n+1) + ADP + phosphate + H(+). It participates in cofactor biosynthesis; tetrahydrofolylpolyglutamate biosynthesis. Functionally, catalyzes conversion of folates to polyglutamate derivatives allowing concentration of folate compounds in the cell and the intracellular retention of these cofactors, which are important substrates for most of the folate-dependent enzymes that are involved in one-carbon transfer reactions involved in purine, pyrimidine and amino acid synthesis. In Neurospora crassa (strain ATCC 24698 / 74-OR23-1A / CBS 708.71 / DSM 1257 / FGSC 987), this protein is Folylpolyglutamate synthase (met-6).